The sequence spans 523 residues: MSQQVIIFDTTLRDGEQALQASLSVKEKLQIALALERMGVDVMEVGFPVSSPGDFESVQTIALQVKNSRVCALARCVEKDIDVAAESLKVAEAFRIHTFIATSPMHIATKLRSTLDEVIERAIYMVKRARNYTDDVEFSCEDAGRTPIADLARVVEAAINAGATTINIPDTVGYTMPFEFAGIISGLYERVPNIDKAIISVHTHDDLGLAVGNSLAAVHAGARQVEGAMNGIGERAGNCSLEEVIMAIKVRKDILNVHTAINHQEIWRTSQLVSQICNMPIPANKAIVGSGAFAHSSGIHQDGVLKNRENYEIMTPESIGLNQIQLNLTSRSGRAAVKHRMDEMGYKESEYNLDNLYDAFLKLADKKGQVFDYDLEALAFIGKQQEEPEHFRLDYFSVQSGSNDIATAAVKLACGEEVKAEAANGNGPVDAVYQAINRITDYNVELVKYSLTAKGHGKDALGQVDIVANYNGRRFHGVGLATDIVESSAKAMVHVLNNIWRAAEVEKELQRKAQHNENNKETV.

Residues 5 to 267 enclose the Pyruvate carboxyltransferase domain; sequence VIIFDTTLRD…HTAINHQEIW (263 aa). Residues Asp-14, His-202, His-204, and Asn-238 each contribute to the Mn(2+) site. Residues 392–523 form a regulatory domain region; it reads RLDYFSVQSG…QHNENNKETV (132 aa).

The protein belongs to the alpha-IPM synthase/homocitrate synthase family. LeuA type 1 subfamily. Homodimer. The cofactor is Mn(2+).

It localises to the cytoplasm. The enzyme catalyses 3-methyl-2-oxobutanoate + acetyl-CoA + H2O = (2S)-2-isopropylmalate + CoA + H(+). Its pathway is amino-acid biosynthesis; L-leucine biosynthesis; L-leucine from 3-methyl-2-oxobutanoate: step 1/4. Catalyzes the condensation of the acetyl group of acetyl-CoA with 3-methyl-2-oxobutanoate (2-ketoisovalerate) to form 3-carboxy-3-hydroxy-4-methylpentanoate (2-isopropylmalate). This is 2-isopropylmalate synthase from Escherichia coli O81 (strain ED1a).